Here is a 197-residue protein sequence, read N- to C-terminus: Nucleoid occlusion factor SlmA (197 aa).

The region spanning 7–67 (INRREHILQC…GLIEFIEESL (61 aa)) is the HTH tetR-type domain. The H-T-H motif DNA-binding region spans 30 to 49 (TTAKLASEVGVSEAALYRHF). Residues 109–136 (DALLGENERLRSRISNLFAKIETQLKQI) adopt a coiled-coil conformation.

This sequence belongs to the nucleoid occlusion factor SlmA family. In terms of assembly, homodimer. Interacts with FtsZ.

The protein localises to the cytoplasm. Its subcellular location is the nucleoid. Its function is as follows. Required for nucleoid occlusion (NO) phenomenon, which prevents Z-ring formation and cell division over the nucleoid. Acts as a DNA-associated cell division inhibitor that binds simultaneously chromosomal DNA and FtsZ, and disrupts the assembly of FtsZ polymers. SlmA-DNA-binding sequences (SBS) are dispersed on non-Ter regions of the chromosome, preventing FtsZ polymerization at these regions. The protein is Nucleoid occlusion factor SlmA of Shewanella baltica (strain OS223).